Consider the following 405-residue polypeptide: MDHLPMPKFGPLAGLRVVFSGIEIAGPFAGQMFAEWGAEVIWIENVAWADTIRVQPNYPQLSRRNLHALSLNIFKDEGREAFLKLMETTDIFIEASKGPAFARRGITDEVLWQHNPKLVIAHLSGFGQYGTEEYTNLPAYNTIAQAFSGYLIQNGDVDQPMPAFPYTADYFSGLTATTAALAALHKVRETGKGESIDIAMYEVMLRMGQYFMMDYFNGGEMCPRMTKGKDPYYAGCGLYKCADGYIVMELVGITQITECFKDIGLAHLLGTPEIPEGTQLIHRIECPYGPLVEEKLDAWLAAHTIAEVKERFAELNIACAKVLTVPELESNPQYVARESITQWQTMDGRTCKGPNIMPKFKNNPGQIWRGMPSHGMDTAAILKNIGYSENDIQELVSKGLAKVED.

Residues K97 and R104 each coordinate CoA. D169 (nucleophile) is an active-site residue.

The protein belongs to the CoA-transferase III family. CaiB subfamily. In terms of assembly, homodimer.

The protein localises to the cytoplasm. The enzyme catalyses crotonobetainyl-CoA + (R)-carnitine = crotonobetaine + (R)-carnitinyl-CoA. The catalysed reaction is 4-(trimethylamino)butanoyl-CoA + (R)-carnitine = (R)-carnitinyl-CoA + 4-(trimethylamino)butanoate. It functions in the pathway amine and polyamine metabolism; carnitine metabolism. In terms of biological role, catalyzes the reversible transfer of the CoA moiety from gamma-butyrobetainyl-CoA to L-carnitine to generate L-carnitinyl-CoA and gamma-butyrobetaine. Is also able to catalyze the reversible transfer of the CoA moiety from gamma-butyrobetainyl-CoA or L-carnitinyl-CoA to crotonobetaine to generate crotonobetainyl-CoA. The chain is L-carnitine CoA-transferase from Escherichia coli O6:K15:H31 (strain 536 / UPEC).